The chain runs to 157 residues: Ribosome maturation factor RimP (157 aa).

This sequence belongs to the RimP family.

Its subcellular location is the cytoplasm. Its function is as follows. Required for maturation of 30S ribosomal subunits. In Levilactobacillus brevis (strain ATCC 367 / BCRC 12310 / CIP 105137 / JCM 1170 / LMG 11437 / NCIMB 947 / NCTC 947) (Lactobacillus brevis), this protein is Ribosome maturation factor RimP.